We begin with the raw amino-acid sequence, 624 residues long: Penicillin-binding protein 4 (624 aa).

The signal sequence occupies residues 1–21; it reads MTMLRKIIGWILLLCIIPLFA. The active-site Proton donor; for transglycosylase activity is the glutamate 96. Serine 388 functions as the Acyl-ester intermediate; for transpeptidase activity in the catalytic mechanism.

In the N-terminal section; belongs to the glycosyltransferase 51 family. It in the C-terminal section; belongs to the transpeptidase family. The N-terminus is blocked.

It is found in the cell membrane. The catalysed reaction is [GlcNAc-(1-&gt;4)-Mur2Ac(oyl-L-Ala-gamma-D-Glu-L-Lys-D-Ala-D-Ala)](n)-di-trans,octa-cis-undecaprenyl diphosphate + beta-D-GlcNAc-(1-&gt;4)-Mur2Ac(oyl-L-Ala-gamma-D-Glu-L-Lys-D-Ala-D-Ala)-di-trans,octa-cis-undecaprenyl diphosphate = [GlcNAc-(1-&gt;4)-Mur2Ac(oyl-L-Ala-gamma-D-Glu-L-Lys-D-Ala-D-Ala)](n+1)-di-trans,octa-cis-undecaprenyl diphosphate + di-trans,octa-cis-undecaprenyl diphosphate + H(+). It carries out the reaction Preferential cleavage: (Ac)2-L-Lys-D-Ala-|-D-Ala. Also transpeptidation of peptidyl-alanyl moieties that are N-acyl substituents of D-alanine.. Functionally, cell wall formation. Synthesis of cross-linked peptidoglycan from the lipid intermediates. The enzyme has a penicillin-insensitive transglycosylase N-terminal domain (formation of linear glycan strands) and a penicillin-sensitive transpeptidase C-terminal domain (cross-linking of the peptide subunits). Has a partially redundant function with PBP-2A (pbpA) during spore outgrowth. This Bacillus subtilis (strain 168) protein is Penicillin-binding protein 4.